The sequence spans 535 residues: uncharacterized protein (535 aa).

6 WD repeats span residues 189–226 (RDDF…TRVL), 228–267 (ESIY…PRIS), 269–314 (HHPG…AVLV), 320–359 (AHDE…QPLY), 362–404 (QQNA…KIDE), and 462–505 (VHSV…SWHN).

The protein belongs to the WD repeat CDC20/Fizzy family.

This is an uncharacterized protein from Schizosaccharomyces pombe (strain 972 / ATCC 24843) (Fission yeast).